A 419-amino-acid polypeptide reads, in one-letter code: Synaptotagmin-2 (419 aa).

Residues 1 to 62 are Vesicular-facing; that stretch reads MRNIFKRNQE…NEINKIPLPP (62 aa). The interval 16-39 is disordered; sequence ATTTATMPIGPVDNSTESGGAGES. An N-linked (GlcNAc...) asparagine glycan is attached at asparagine 29. Residues 63–83 traverse the membrane as a helical segment; that stretch reads WALIAIAVVAGLLLLTCCFCI. Over 84–419 the chain is Cytoplasmic; that stretch reads CKKCCCKKKK…EVDALLGKNK (336 aa). Positions 99 to 138 are disordered; the sequence is GKGMKNAMNMKDMKGGQDDDDAETGLTEGEGEGEEEKEPE. The segment covering 116 to 136 has biased composition (acidic residues); it reads DDDDAETGLTEGEGEGEEEKE. Phosphothreonine is present on residues threonine 122 and threonine 125. Positions 133–379 are phospholipid binding; sequence EEKEPENLGK…AIGKIFVGSN (247 aa). C2 domains lie at 139 to 258 and 270 to 403; these read NLGK…EEWR and KLGD…AQWH. Ca(2+) is bound by residues leucine 169, aspartate 170, and aspartate 176. A Phosphothreonine modification is found at threonine 199. Residue tyrosine 227 is modified to Phosphotyrosine. Ca(2+)-binding residues include aspartate 228, phenylalanine 229, aspartate 230, serine 233, lysine 234, aspartate 236, aspartate 301, aspartate 307, aspartate 361, and aspartate 363. Residue threonine 383 is modified to Phosphothreonine.

It belongs to the synaptotagmin family. As to quaternary structure, homotetramer. Heterodimer; heterodimerizes with SYT1 in presence of calcium. Interacts with STON2. Interacts with SCAMP5. Interacts with PRRT2. It depends on Ca(2+) as a cofactor. Phosphorylation at Thr-199 by WNK1, changes the calcium requirement for SYT2-binding to phospholipid membranes. As to expression, expressed at the neuromuscular junction. Expressed in melanocytes.

The protein localises to the cytoplasmic vesicle. It localises to the secretory vesicle. The protein resides in the synaptic vesicle membrane. Its subcellular location is the chromaffin granule membrane. It is found in the cytoplasm. In terms of biological role, exhibits calcium-dependent phospholipid and inositol polyphosphate binding properties. May have a regulatory role in the membrane interactions during trafficking of synaptic vesicles at the active zone of the synapse. Plays a role in dendrite formation by melanocytes. The chain is Synaptotagmin-2 from Homo sapiens (Human).